The sequence spans 233 residues: Germin-like protein (233 aa).

The first 22 residues, 1 to 22 (MEAYKMFAFVVLLATTLYQAYA), serve as a signal peptide directing secretion. Residues Cys-32 and Cys-49 are joined by a disulfide bond. Residues 63–215 (RGLNMPANTD…RPSISMRIWS (153 aa)) enclose the Cupin type-1 domain. Mn(2+) is bound by residues His-111, His-113, Glu-118, and His-162.

Belongs to the germin family. As to quaternary structure, oligomer (believed to be a pentamer but probably hexamer). As to expression, expressed at high levels in unstressed roots.

Its subcellular location is the secreted. It localises to the extracellular space. The protein localises to the apoplast. May be involved in seed germination. The sequence is that of Germin-like protein from Mesembryanthemum crystallinum (Common ice plant).